We begin with the raw amino-acid sequence, 425 residues long: Glutamyl-tRNA reductase (425 aa).

Residues 49 to 52 (TCNR), serine 107, 112 to 114 (EPQ), and glutamine 118 contribute to the substrate site. Cysteine 50 serves as the catalytic Nucleophile. 187-192 (GAGETI) contributes to the NADP(+) binding site.

The protein belongs to the glutamyl-tRNA reductase family. In terms of assembly, homodimer.

It carries out the reaction (S)-4-amino-5-oxopentanoate + tRNA(Glu) + NADP(+) = L-glutamyl-tRNA(Glu) + NADPH + H(+). Its pathway is porphyrin-containing compound metabolism; protoporphyrin-IX biosynthesis; 5-aminolevulinate from L-glutamyl-tRNA(Glu): step 1/2. In terms of biological role, catalyzes the NADPH-dependent reduction of glutamyl-tRNA(Glu) to glutamate 1-semialdehyde (GSA). The polypeptide is Glutamyl-tRNA reductase (Pseudomonas entomophila (strain L48)).